Here is a 1316-residue protein sequence, read N- to C-terminus: DNA-directed RNA polymerase subunit beta' (1316 aa).

Zn(2+) contacts are provided by Cys-60, Cys-62, Cys-75, and Cys-78. Asp-535, Asp-537, and Asp-539 together coordinate Mg(2+). The Zn(2+) site is built by Cys-891, Cys-968, Cys-975, and Cys-978.

Belongs to the RNA polymerase beta' chain family. In terms of assembly, the RNAP catalytic core consists of 2 alpha, 1 beta, 1 beta' and 1 omega subunit. When a sigma factor is associated with the core the holoenzyme is formed, which can initiate transcription. It depends on Mg(2+) as a cofactor. Zn(2+) is required as a cofactor.

It carries out the reaction RNA(n) + a ribonucleoside 5'-triphosphate = RNA(n+1) + diphosphate. Functionally, DNA-dependent RNA polymerase catalyzes the transcription of DNA into RNA using the four ribonucleoside triphosphates as substrates. In Mycobacterium bovis (strain BCG / Pasteur 1173P2), this protein is DNA-directed RNA polymerase subunit beta'.